A 265-amino-acid chain; its full sequence is Glutamate racemase (265 aa).

Substrate is bound by residues 9–10 (DS) and 41–42 (YG). Cys-72 functions as the Proton donor/acceptor in the catalytic mechanism. 73–74 (NT) lines the substrate pocket. Cys-183 acts as the Proton donor/acceptor in catalysis. Position 184–185 (184–185 (TH)) interacts with substrate.

It belongs to the aspartate/glutamate racemases family.

It carries out the reaction L-glutamate = D-glutamate. Its pathway is cell wall biogenesis; peptidoglycan biosynthesis. Provides the (R)-glutamate required for cell wall biosynthesis. The protein is Glutamate racemase of Lysinibacillus sphaericus (Bacillus sphaericus).